Here is a 435-residue protein sequence, read N- to C-terminus: 3-phosphoshikimate 1-carboxyvinyltransferase (435 aa).

Residues Lys-22, Ser-23, and Arg-27 each contribute to the 3-phosphoshikimate site. Residue Lys-22 participates in phosphoenolpyruvate binding. Positions 94 and 122 each coordinate phosphoenolpyruvate. 3-phosphoshikimate contacts are provided by Ser-166, Gln-168, Asp-314, and Lys-341. Gln-168 is a binding site for phosphoenolpyruvate. Residue Asp-314 is the Proton acceptor of the active site. The phosphoenolpyruvate site is built by Arg-345 and Arg-388.

The protein belongs to the EPSP synthase family. In terms of assembly, monomer.

The protein resides in the cytoplasm. It carries out the reaction 3-phosphoshikimate + phosphoenolpyruvate = 5-O-(1-carboxyvinyl)-3-phosphoshikimate + phosphate. Its pathway is metabolic intermediate biosynthesis; chorismate biosynthesis; chorismate from D-erythrose 4-phosphate and phosphoenolpyruvate: step 6/7. Its function is as follows. Catalyzes the transfer of the enolpyruvyl moiety of phosphoenolpyruvate (PEP) to the 5-hydroxyl of shikimate-3-phosphate (S3P) to produce enolpyruvyl shikimate-3-phosphate and inorganic phosphate. In Ruthia magnifica subsp. Calyptogena magnifica, this protein is 3-phosphoshikimate 1-carboxyvinyltransferase.